Reading from the N-terminus, the 258-residue chain is MVLIRVLANLLVLQLSYAQKSSELVVGGHPCNIYEHHFLAFMYNSSGFMCSGTLINQQWVLSAAHCDMENMHIYLGLHSFKLPNKDQKKRVAKEKFFCLSSKSYTKWDKDIMLIKLNKPVTYSTHIASLSLPSNPPRVGSVCRIMGWGSITSPKKILPFVPHCANINIVPYTVCRVIYRPLPEQSRTLCAGVSGRRIGSCLGDSGGPLICNGQIQGIVSWGSDPCVNRGAPSIYTKVFDYTDWIHSIIAGNTAATCPS.

An N-terminal signal peptide occupies residues 1-18 (MVLIRVLANLLVLQLSYA). Positions 19–24 (QKSSEL) are excised as a propeptide. In terms of domain architecture, Peptidase S1 spans 25 to 249 (VVGGHPCNIY…YTDWIHSIIA (225 aa)). 6 cysteine pairs are disulfide-bonded: C31-C163, C50-C66, C98-C256, C142-C210, C174-C189, and C200-C225. N44 is a glycosylation site (N-linked (GlcNAc...) asparagine). Catalysis depends on charge relay system residues H65 and D110. The active-site Charge relay system is the S204.

Belongs to the peptidase S1 family. Snake venom subfamily. As to quaternary structure, monomer. As to expression, expressed by the venom gland.

It is found in the secreted. Degrades alpha chain of fibrinogen (FGA), and has strong caseinolytic activity. Cleaves oxidized insulin B-chain at '40-Tyr-|-Leu-41', '48-Phe-|-Phe-49' and '49-Phe-|-Tyr-50', and glucagon at the bonds '62-Tyr-|-Ser-63', 66-Leu-|-Asp-67' and '78-Leu-|-Met-79' bonds. This chain is Alpha-fibrinogenase-like, found in Daboia siamensis (Eastern Russel's viper).